We begin with the raw amino-acid sequence, 208 residues long: Large ribosomal subunit protein bL25 (208 aa).

Belongs to the bacterial ribosomal protein bL25 family. CTC subfamily. Part of the 50S ribosomal subunit; part of the 5S rRNA/L5/L18/L25 subcomplex. Contacts the 5S rRNA. Binds to the 5S rRNA independently of L5 and L18.

This is one of the proteins that binds to the 5S RNA in the ribosome where it forms part of the central protuberance. The sequence is that of Large ribosomal subunit protein bL25 from Syntrophotalea carbinolica (strain DSM 2380 / NBRC 103641 / GraBd1) (Pelobacter carbinolicus).